We begin with the raw amino-acid sequence, 460 residues long: Dihydroorotate dehydrogenase (quinone), mitochondrial (460 aa).

The transit peptide at 1–32 (MAGRAATSSAKWAREFLFRRVSSNPLGATRNC) directs the protein to the mitochondrion. A helical membrane pass occupies residues 53 to 69 (ILTGATIGLAIAGGAYV). FMN is bound by residues 141-145 (AGFDK) and Ser-165. A substrate-binding site is contributed by Lys-145. Position 190-194 (190-194 (NRCGF)) interacts with substrate. Positions 213-245 (RMLAETSATSSSPSDDVKPGGKSGPGILGVNLG) are disordered. FMN-binding residues include Asn-243 and Asn-274. 274–279 (NVSSPN) lines the substrate pocket. The active-site Nucleophile is Ser-277. Residues Lys-319 and Ser-347 each contribute to the FMN site. 348 to 349 (NT) is a binding site for substrate. Residues Gly-371, Gly-400, and 421–422 (YT) each bind FMN.

This sequence belongs to the dihydroorotate dehydrogenase family. Type 2 subfamily. It depends on FMN as a cofactor.

The protein localises to the mitochondrion inner membrane. The catalysed reaction is (S)-dihydroorotate + a quinone = orotate + a quinol. The protein operates within pyrimidine metabolism; UMP biosynthesis via de novo pathway; orotate from (S)-dihydroorotate (quinone route): step 1/1. Functionally, catalyzes the conversion of dihydroorotate to orotate with quinone as electron acceptor. This is Dihydroorotate dehydrogenase (quinone), mitochondrial (PYRD) from Arabidopsis thaliana (Mouse-ear cress).